We begin with the raw amino-acid sequence, 247 residues long: Homeobox-leucine zipper protein HOX17 (247 aa).

The segment at 58 to 81 (ERAGLRGGGGSDEEDGGCGIDGSR) is disordered. Positions 79-138 (GSRKKLRLSKDQSAVLEDSFREHPTLNPRQKATLAQQLGLRPRQVEVWFQNRRARTKLKQ) form a DNA-binding region, homeobox. Positions 137-182 (KQTEVDCEFLKRCCETLTEENRRLQKEVQELRALKLVSPHLYMNMS) are leucine-zipper.

Belongs to the HD-ZIP homeobox family. Class II subfamily. In terms of tissue distribution, expressed in seedlings, roots, stems, leaf sheaths and blades and panicles.

It localises to the nucleus. Its function is as follows. Probable transcription factor. The polypeptide is Homeobox-leucine zipper protein HOX17 (HOX17) (Oryza sativa subsp. japonica (Rice)).